The primary structure comprises 180 residues: MKVKMIMLLFQILAILTLKSDSADVPDGYIQENVALRGRATQSAQLRGEHAGISHASNAIDGNRDSYFYHGSCSHTEGDNPLWRVDLLQVYTITSVTITNRGDCCGERISGARILIGKHLENNGINNPECSTINIMAAGETRTFHCPQPMIGRYVTVYLPKTGTLHLCEVEVNVLFPAPC.

An N-terminal signal peptide occupies residues Met1–Ser22. The tract at residues Gln31–Pro179 is F5/8 type C-like. Positions 58, 61, 63, and 72 each coordinate Ca(2+). 3 cysteine pairs are disulfide-bonded: Cys73-Cys168, Cys104-Cys105, and Cys130-Cys146. Alpha-L-fucose-binding residues include His75 and Arg101. A Cell attachment site motif is present at residues Arg101–Asp103. Arg108 is an alpha-L-fucose binding site. Residues Cys168 and Glu169 each contribute to the Ca(2+) site.

The protein belongs to the fucolectin family. In terms of assembly, homotrimer. Parenchymal hepatocytes.

The protein localises to the secreted. It is found in the extracellular space. Functionally, acts as a defensive agent. Recognizes blood group fucosylated oligosaccharides including A, B, H and Lewis B-type antigens. Does not recognize Lewis A antigen and has low affinity for monovalent haptens. This Anguilla japonica (Japanese eel) protein is Fucolectin-2.